The primary structure comprises 441 residues: ATP-dependent protease ATPase subunit HslU (441 aa).

Residues I18, 60-65, D254, E319, and R391 each bind ATP; that span reads GVGKTE.

Belongs to the ClpX chaperone family. HslU subfamily. In terms of assembly, a double ring-shaped homohexamer of HslV is capped on each side by a ring-shaped HslU homohexamer. The assembly of the HslU/HslV complex is dependent on binding of ATP.

The protein localises to the cytoplasm. Functionally, ATPase subunit of a proteasome-like degradation complex; this subunit has chaperone activity. The binding of ATP and its subsequent hydrolysis by HslU are essential for unfolding of protein substrates subsequently hydrolyzed by HslV. HslU recognizes the N-terminal part of its protein substrates and unfolds these before they are guided to HslV for hydrolysis. This is ATP-dependent protease ATPase subunit HslU from Shewanella pealeana (strain ATCC 700345 / ANG-SQ1).